The sequence spans 184 residues: Endoribonuclease YbeY (184 aa).

Acidic residues-rich tracts occupy residues 1–11 and 19–29; these read MTVEVGADENP and DGAGDESDDED. A disordered region spans residues 1–37; the sequence is MTVEVGADENPDFAHDETDGAGDESDDEDAQGRDPEL. Zn(2+)-binding residues include H146, H150, and H156.

Belongs to the endoribonuclease YbeY family. It depends on Zn(2+) as a cofactor.

It localises to the cytoplasm. Single strand-specific metallo-endoribonuclease involved in late-stage 70S ribosome quality control and in maturation of the 3' terminus of the 16S rRNA. This Burkholderia mallei (strain ATCC 23344) protein is Endoribonuclease YbeY.